The chain runs to 709 residues: Polyribonucleotide nucleotidyltransferase (709 aa).

Residues aspartate 486 and aspartate 492 each coordinate Mg(2+). Residues 553–612 form the KH domain; the sequence is PRIHTIKINPDKIKDVIGKGGSVIRALTEETGTTIEIEDDGTVKIAATDGEKAKHAISRI. Positions 622–690 constitute an S1 motif domain; sequence ARIYTGKVTR…RQGRVRLSIK (69 aa).

Belongs to the polyribonucleotide nucleotidyltransferase family. In terms of assembly, component of the RNA degradosome, which is a multiprotein complex involved in RNA processing and mRNA degradation. Mg(2+) serves as cofactor.

It is found in the cytoplasm. The catalysed reaction is RNA(n+1) + phosphate = RNA(n) + a ribonucleoside 5'-diphosphate. In terms of biological role, involved in mRNA degradation. Catalyzes the phosphorolysis of single-stranded polyribonucleotides processively in the 3'- to 5'-direction. In Photorhabdus laumondii subsp. laumondii (strain DSM 15139 / CIP 105565 / TT01) (Photorhabdus luminescens subsp. laumondii), this protein is Polyribonucleotide nucleotidyltransferase.